The chain runs to 481 residues: Cytochrome P450 monooygenase 2 (481 aa).

The chain crosses the membrane as a helical span at residues G12–I32. Residue C418 participates in heme binding.

It belongs to the cytochrome P450 family. Heme is required as a cofactor.

The protein localises to the membrane. It functions in the pathway plant hormone biosynthesis; gibberellin biosynthesis. Functionally, gibberellin 20-oxidase; part of the gene cluster that mediates the biosynthesis of gibberellins (GAs), diterpenoids that may provide a selective advantage during infection of the preferred host plant, rice. Gibberellins (GAs) are diterpenoids and are synthesized via the mevalonate pathway. Biosynthesis of the major metabolite GA3 (gibberellic acid) from geranylgeranyl diphosphate (GGPP) requires 13 steps. The GGPP produced by the geranylgeranyl diphosphate synthase GGS2 is converted to ent-kaurene via ent-copalyldiphosphate in a two-step cyclization reaction performed by the bifunctional ent-copalyl diphosphate synthase/ent-kaurene synthase enzyme (CPS/KS). Ent-Kaurene is metabolized to GAs by a series of oxidation reactions catalyzed by cytochrome P450 monooxygenases. Cytochrome P450 monooxygenase P450-4 is an ent-kaurene oxidase that catalyzes the three oxidation steps between ent-kaurene and ent-kaurenoic acid. The highly multifunctional cytochrome P450 monooxygenase P450-1 then catalyzes four steps involving oxidation at two carbon atoms, in the main pathway from ent-kaurenoic acid to GA14 via GA12-aldehyde as well as producing kaurenolides and fujenoic acids as by-products. The cytochrome P450 monooxygenase P450-2 then converts GA14 to GA4 by removal of C-20. GA4 is further converted to GA7 by the GA4 desaturase DES via 1,2-desaturation before cytochrome P450 monooxygenase P450-3, a 13-hydroxylase, hydroxylates GA7 to GA3, the final product of the GA-biosynthetic pathway. This Gibberella fujikuroi (strain CBS 195.34 / IMI 58289 / NRRL A-6831) (Bakanae and foot rot disease fungus) protein is Cytochrome P450 monooygenase 2.